Here is a 388-residue protein sequence, read N- to C-terminus: Queuine tRNA-ribosyltransferase (388 aa).

The active-site Proton acceptor is D91. Residues 91 to 95, D145, Q190, and G217 contribute to the substrate site; that span reads DSGGY. The RNA binding stretch occupies residues 248–254; that stretch reads GVGAPED. D267 functions as the Nucleophile in the catalytic mechanism. An RNA binding; important for wobble base 34 recognition region spans residues 272–276; the sequence is TRLAR. The Zn(2+) site is built by C305, C307, C310, and H336.

The protein belongs to the queuine tRNA-ribosyltransferase family. In terms of assembly, homodimer. Within each dimer, one monomer is responsible for RNA recognition and catalysis, while the other monomer binds to the replacement base PreQ1. The cofactor is Zn(2+).

It carries out the reaction 7-aminomethyl-7-carbaguanine + guanosine(34) in tRNA = 7-aminomethyl-7-carbaguanosine(34) in tRNA + guanine. The protein operates within tRNA modification; tRNA-queuosine biosynthesis. In terms of biological role, catalyzes the base-exchange of a guanine (G) residue with the queuine precursor 7-aminomethyl-7-deazaguanine (PreQ1) at position 34 (anticodon wobble position) in tRNAs with GU(N) anticodons (tRNA-Asp, -Asn, -His and -Tyr). Catalysis occurs through a double-displacement mechanism. The nucleophile active site attacks the C1' of nucleotide 34 to detach the guanine base from the RNA, forming a covalent enzyme-RNA intermediate. The proton acceptor active site deprotonates the incoming PreQ1, allowing a nucleophilic attack on the C1' of the ribose to form the product. After dissociation, two additional enzymatic reactions on the tRNA convert PreQ1 to queuine (Q), resulting in the hypermodified nucleoside queuosine (7-(((4,5-cis-dihydroxy-2-cyclopenten-1-yl)amino)methyl)-7-deazaguanosine). The sequence is that of Queuine tRNA-ribosyltransferase from Dictyoglomus turgidum (strain DSM 6724 / Z-1310).